The chain runs to 129 residues: Small ribosomal subunit protein uS11 (129 aa).

The protein belongs to the universal ribosomal protein uS11 family. In terms of assembly, part of the 30S ribosomal subunit. Interacts with proteins S7 and S18. Binds to IF-3.

In terms of biological role, located on the platform of the 30S subunit, it bridges several disparate RNA helices of the 16S rRNA. Forms part of the Shine-Dalgarno cleft in the 70S ribosome. This chain is Small ribosomal subunit protein uS11, found in Lactobacillus gasseri (strain ATCC 33323 / DSM 20243 / BCRC 14619 / CIP 102991 / JCM 1131 / KCTC 3163 / NCIMB 11718 / NCTC 13722 / AM63).